Reading from the N-terminus, the 506-residue chain is Maturase K (506 aa).

Belongs to the intron maturase 2 family. MatK subfamily.

Its subcellular location is the plastid. It is found in the chloroplast. Its function is as follows. Usually encoded in the trnK tRNA gene intron. Probably assists in splicing its own and other chloroplast group II introns. The protein is Maturase K of Trifolium striatum (Knotted clover).